Here is a 172-residue protein sequence, read N- to C-terminus: MLLNKKNSPIILIGFMGTGKSTIGEYLSLEKQLSFIDLDVYIEIKENKTIPEIFEEVGEIGFRKIEYNYLTECTKKYDVIATGGGVIEYTESLNYLKQYKYIFWLDCDIDVIFKRVTNDKHRPNAIDKSKKQLNNLYLSRISRYNEIAFMKVNSDKTIREIYNEIINYLTCG.

An ATP-binding site is contributed by 17–22 (GTGKST). Serine 21 is a Mg(2+) binding site. Positions 39, 63, and 84 each coordinate substrate. Arginine 122 lines the ATP pocket. Residue arginine 140 participates in substrate binding.

This sequence belongs to the shikimate kinase family. Monomer. Requires Mg(2+) as cofactor.

The protein resides in the cytoplasm. The enzyme catalyses shikimate + ATP = 3-phosphoshikimate + ADP + H(+). It functions in the pathway metabolic intermediate biosynthesis; chorismate biosynthesis; chorismate from D-erythrose 4-phosphate and phosphoenolpyruvate: step 5/7. Catalyzes the specific phosphorylation of the 3-hydroxyl group of shikimic acid using ATP as a cosubstrate. This is Shikimate kinase from Staphylococcus haemolyticus (strain JCSC1435).